The sequence spans 114 residues: Non-specific lipid-transfer protein 1 (114 aa).

The N-terminal stretch at 1–25 (MIKGLAITVVAVLAVVQLLARPSDA) is a signal peptide. 4 disulfide bridges follow: Cys-29/Cys-76, Cys-39/Cys-53, Cys-54/Cys-99, and Cys-74/Cys-113.

This sequence belongs to the plant LTP family. As to expression, expressed in seeds and, at very low levels, in pulp of fruit (at protein level).

In terms of biological role, plant non-specific lipid-transfer proteins transfer phospholipids as well as galactolipids across membranes. May play a role in wax or cutin deposition in the cell walls of expanding epidermal cells and certain secretory tissues. The chain is Non-specific lipid-transfer protein 1 from Actinidia chinensis var. chinensis (Chinese soft-hair kiwi).